The sequence spans 103 residues: Cyclotide vibi-I (103 aa).

An N-terminal signal peptide occupies residues 1 to 9 (AAFALPAFA). Residues 10 to 69 (SFEKDVITPAALEAVLNRKAPLSNIMMENDAILNVIANVKTVISNPVLEEALLKTNHGVN) constitute a propeptide that is removed on maturation. A cross-link (cyclopeptide (Gly-Asn)) is located at residues 70–99 (GIPCGESCVWIPCLTSTVGCSCKSKVCYRN). Disulfide bonds link C73–C89, C77–C91, and C82–C96. A propeptide spanning residues 100 to 103 (SLDN) is cleaved from the precursor.

Post-translationally, this is a cyclic peptide.

Probably participates in a plant defense mechanism. In Viola biflora (Yellow wood violet), this protein is Cyclotide vibi-I.